The chain runs to 520 residues: Peptide chain release factor 3 (520 aa).

The 266-residue stretch at 8 to 273 (EIRKTFAIIS…AYVDHAPMPS (266 aa)) folds into the tr-type G domain. GTP is bound by residues 17–24 (SHPDAGKT), 85–89 (DTPGH), and 139–142 (NKLD).

Belongs to the TRAFAC class translation factor GTPase superfamily. Classic translation factor GTPase family. PrfC subfamily.

It localises to the cytoplasm. In terms of biological role, increases the formation of ribosomal termination complexes and stimulates activities of RF-1 and RF-2. It binds guanine nucleotides and has strong preference for UGA stop codons. It may interact directly with the ribosome. The stimulation of RF-1 and RF-2 is significantly reduced by GTP and GDP, but not by GMP. The chain is Peptide chain release factor 3 from Macrococcus caseolyticus (strain JCSC5402) (Macrococcoides caseolyticum).